A 382-amino-acid polypeptide reads, in one-letter code: Homoserine O-succinyltransferase (382 aa).

In terms of domain architecture, AB hydrolase-1 spans 51 to 359; the sequence is NAVLICHALS…DAPWGHDAFL (309 aa). Ser157 (nucleophile) is an active-site residue. Arg227 provides a ligand contact to substrate. Residues Asp322 and His355 contribute to the active site. Substrate is bound at residue Asp356.

This sequence belongs to the AB hydrolase superfamily. MetX family. As to quaternary structure, homodimer.

It localises to the cytoplasm. The enzyme catalyses L-homoserine + succinyl-CoA = O-succinyl-L-homoserine + CoA. It participates in amino-acid biosynthesis; L-methionine biosynthesis via de novo pathway; O-succinyl-L-homoserine from L-homoserine: step 1/1. Its function is as follows. Transfers a succinyl group from succinyl-CoA to L-homoserine, forming succinyl-L-homoserine. This chain is Homoserine O-succinyltransferase, found in Marinobacter nauticus (strain ATCC 700491 / DSM 11845 / VT8) (Marinobacter aquaeolei).